Here is a 1102-residue protein sequence, read N- to C-terminus: Carbamoyl phosphate synthase large chain (1102 aa).

The segment at 1-408 is carboxyphosphate synthetic domain; the sequence is MPKRSDIQSV…ALQKALRSLE (408 aa). ATP-binding residues include R129, R175, G181, G182, E214, I216, E221, G247, V248, H249, Q291, and E305. The ATP-grasp 1 domain occupies 137–334; the sequence is EAVKEKIGYG…IAKIAAKLAV (198 aa). Positions 291, 305, and 307 each coordinate Mg(2+). 3 residues coordinate Mn(2+): Q291, E305, and N307. The tract at residues 409–551 is oligomerization domain; the sequence is KKGSQFAFTG…YFYSSYDEES (143 aa). The interval 552–954 is carbamoyl phosphate synthetic domain; sequence EVAPRTKPAV…AYAKSQAGAY (403 aa). An ATP-grasp 2 domain is found at 682-873; sequence GRVLAEAGLP…LAKAAARISL (192 aa). Positions 718, 757, 759, 764, 789, 790, 791, 792, 832, and 844 each coordinate ATP. Q832, E844, and N846 together coordinate Mg(2+). Mn(2+)-binding residues include Q832, E844, and N846. Residues 955–1100 enclose the MGS-like domain; that stretch reads GPLPTAGRAF…QEHAEHLTAA (146 aa). An allosteric domain region spans residues 955–1102; that stretch reads GPLPTAGRAF…HAEHLTAARD (148 aa).

The protein belongs to the CarB family. Composed of two chains; the small (or glutamine) chain promotes the hydrolysis of glutamine to ammonia, which is used by the large (or ammonia) chain to synthesize carbamoyl phosphate. Tetramer of heterodimers (alpha,beta)4. Requires Mg(2+) as cofactor. The cofactor is Mn(2+).

It catalyses the reaction hydrogencarbonate + L-glutamine + 2 ATP + H2O = carbamoyl phosphate + L-glutamate + 2 ADP + phosphate + 2 H(+). The enzyme catalyses hydrogencarbonate + NH4(+) + 2 ATP = carbamoyl phosphate + 2 ADP + phosphate + 2 H(+). It participates in amino-acid biosynthesis; L-arginine biosynthesis; carbamoyl phosphate from bicarbonate: step 1/1. It functions in the pathway pyrimidine metabolism; UMP biosynthesis via de novo pathway; (S)-dihydroorotate from bicarbonate: step 1/3. In terms of biological role, large subunit of the glutamine-dependent carbamoyl phosphate synthetase (CPSase). CPSase catalyzes the formation of carbamoyl phosphate from the ammonia moiety of glutamine, carbonate, and phosphate donated by ATP, constituting the first step of 2 biosynthetic pathways, one leading to arginine and/or urea and the other to pyrimidine nucleotides. The large subunit (synthetase) binds the substrates ammonia (free or transferred from glutamine from the small subunit), hydrogencarbonate and ATP and carries out an ATP-coupled ligase reaction, activating hydrogencarbonate by forming carboxy phosphate which reacts with ammonia to form carbamoyl phosphate. This Streptomyces griseus subsp. griseus (strain JCM 4626 / CBS 651.72 / NBRC 13350 / KCC S-0626 / ISP 5235) protein is Carbamoyl phosphate synthase large chain.